The primary structure comprises 382 residues: uncharacterized protein (382 aa).

The next 12 membrane-spanning stretches (helical) occupy residues 14–34, 45–65, 79–99, 102–122, 131–151, 157–177, 204–224, 236–256, 265–285, 289–309, 325–345, and 349–369; these read GLLLLTLAIAVLNTLVPLWLA, MVSSSYFTGNLVGTLLTGYLI, LVFAAGCLGLGLMIGFWSWMA, FVAGVGCAMIWVVVESALMCS, LLAAYMMIYYVGTFLGQLLVS, LMNVLPWVTALILAGILPLLF, LGVNGCIISGIVLGSLYGLMP, NIGFWMAVLVSAGIVGQWPIG, LLVLRVQIFVVILGSIAMLTH, APALFILGAAGFTLYPVAMAW, ALLLSYTIGSLLGPSFTAMLM, and SDNLLFIMIASVSFIYLLMLL.

The protein belongs to the major facilitator superfamily. YcaD (TC 2.A.1.26) family.

It localises to the cell inner membrane. This is an uncharacterized protein from Escherichia fergusonii (strain ATCC 35469 / DSM 13698 / CCUG 18766 / IAM 14443 / JCM 21226 / LMG 7866 / NBRC 102419 / NCTC 12128 / CDC 0568-73).